We begin with the raw amino-acid sequence, 468 residues long: Protein wingless (468 aa).

The N-terminal stretch at 1 to 17 (MDISYIFVICLMALCSG) is a signal peptide. A binds porcupine region spans residues 83 to 106 (VKGANLAISECQHQFRNRRWNCST). Cysteines 93 and 104 form a disulfide. N-linked (GlcNAc...) asparagine glycans are attached at residues Asn-103 and Asn-108. 4 disulfide bridges follow: Cys-146–Cys-154, Cys-156–Cys-185, Cys-233–Cys-247, and Cys-235–Cys-242. The O-palmitoleoyl serine; by PORCN moiety is linked to residue Ser-239. Residues 333 to 362 (ISKIHHPNMPSPNSLPQAGQRGGRNGRRQG) form a disordered region. Cystine bridges form between Cys-397-Cys-428, Cys-413-Cys-423, Cys-427-Cys-467, Cys-443-Cys-458, Cys-445-Cys-455, and Cys-450-Cys-451. N-linked (GlcNAc...) asparagine glycosylation occurs at Asn-414.

The protein belongs to the Wnt family. In terms of assembly, monomer; folds by intramolecular disulfide bonds. Interacts with porcupine (por). Interacts with wls; in the Golgi. Interacts with en. Interacts with the proteoglycan Cow (heparan sulfate-bound form); this stabilizes wg and promotes its extracellular distribution. Interacts with peg; the interaction facilitates short-range diffusion of wg. Palmitoleoylated by porcupine. The lipid group functions as a sorting signal, targeting the ligand to polarized vesicles that transport wg to unique sites at the cell surface. Depalmitoleoylated by notum, leading to inhibit Wnt signaling pathway. Post-translationally, major form is glycosylated at 2 sites, glycosylation is stimulated by porcupine at the ER. As to expression, segmented expression in embryos. In embryonic tracheal cells, expression is in stripes flanking the tracheal placode.

Its subcellular location is the secreted. It is found in the synapse. It localises to the membrane. The protein resides in the extracellular space. The protein localises to the extracellular matrix. Functionally, binds as a ligand to a family of frizzled seven-transmembrane receptors and acts through a cascade of genes on the nucleus. Segment polarity protein. May be a growth factor. Acts on neighboring cells to regulate at least one gene, the homeobox segmentation gene engrailed. Wg signal represses arm phosphorylation. Wg signaling operates by inactivating the sgg repression of engrailed autoactivation. Wg and Wnt2 have a role in the developing trachea and together are responsible for all dorsal trunk formation. Wg also acts in the developing epidermis. Acts as a morphogen, and diffuses long distances despite its lipidation. Lipophorin is required for diffusion, probably by acting as vehicle for its movement, explaining how it can spread over long distances despite its lipidation. In non-neuronal cells, wls directs wg secretion via clathrin-mediated endocytosis and the retromer complex (a conserved protein complex consisting of Vps26 and Vps35) to sustain a wls traffic loop encompassing the Golgi, the cell surface, an endocytic compartment and a retrograde route leading back to the Golgi. In neuronal cells (the larval motorneuron NMJ), wg signal moves across the synapse through the release of wls-containing exosome-like vesicles. In Drosophila melanogaster (Fruit fly), this protein is Protein wingless (wg).